A 279-amino-acid chain; its full sequence is Ribosomal RNA small subunit methyltransferase J (279 aa).

Residues 138–139 (ER) and Asp-194 contribute to the S-adenosyl-L-methionine site.

The protein belongs to the methyltransferase superfamily. RsmJ family.

The protein resides in the cytoplasm. The catalysed reaction is guanosine(1516) in 16S rRNA + S-adenosyl-L-methionine = N(2)-methylguanosine(1516) in 16S rRNA + S-adenosyl-L-homocysteine + H(+). Specifically methylates the guanosine in position 1516 of 16S rRNA. This chain is Ribosomal RNA small subunit methyltransferase J, found in Acinetobacter baumannii (strain ACICU).